A 142-amino-acid polypeptide reads, in one-letter code: Large ribosomal subunit protein uL11 (142 aa).

It belongs to the universal ribosomal protein uL11 family. Part of the ribosomal stalk of the 50S ribosomal subunit. Interacts with L10 and the large rRNA to form the base of the stalk. L10 forms an elongated spine to which L12 dimers bind in a sequential fashion forming a multimeric L10(L12)X complex. Post-translationally, one or more lysine residues are methylated.

Functionally, forms part of the ribosomal stalk which helps the ribosome interact with GTP-bound translation factors. The protein is Large ribosomal subunit protein uL11 of Mycobacterium tuberculosis (strain ATCC 25177 / H37Ra).